Consider the following 129-residue polypeptide: MLIVYYSLTGNVKRFIQKTKYTNTLTLDQAEGINEPYIIVTGTIGFGEIPDPVRQFLDRHSANLLAVAASGNRNWGQNYARAGDLISSTYHVPLLMKFELHGNDNDVKEFNIKVEEISEYHTRETVQSY.

It belongs to the NrdI family.

Probably involved in ribonucleotide reductase function. The polypeptide is Protein NrdI (Macrococcus caseolyticus (strain JCSC5402) (Macrococcoides caseolyticum)).